We begin with the raw amino-acid sequence, 151 residues long: 3-dehydroquinate dehydratase (151 aa).

Tyrosine 24 serves as the catalytic Proton acceptor. Positions 76, 82, and 89 each coordinate substrate. Histidine 102 (proton donor) is an active-site residue. Substrate contacts are provided by residues 103–104 (VS) and arginine 113.

Belongs to the type-II 3-dehydroquinase family. As to quaternary structure, homododecamer.

It carries out the reaction 3-dehydroquinate = 3-dehydroshikimate + H2O. Its pathway is metabolic intermediate biosynthesis; chorismate biosynthesis; chorismate from D-erythrose 4-phosphate and phosphoenolpyruvate: step 3/7. Its function is as follows. Catalyzes a trans-dehydration via an enolate intermediate. The sequence is that of 3-dehydroquinate dehydratase from Rhodopseudomonas palustris (strain HaA2).